The following is a 197-amino-acid chain: Small ribosomal subunit protein uS4c (197 aa).

One can recognise an S4 RNA-binding domain in the interval 92-153; it reads MRLDAVVYRL…APIVEHAKTF (62 aa).

It belongs to the universal ribosomal protein uS4 family. Part of the 30S ribosomal subunit. Contacts protein S5. The interaction surface between S4 and S5 is involved in control of translational fidelity.

It localises to the plastid. The protein localises to the chloroplast. Its function is as follows. One of the primary rRNA binding proteins, it binds directly to 16S rRNA where it nucleates assembly of the body of the 30S subunit. Functionally, with S5 and S12 plays an important role in translational accuracy. This Ostreococcus tauri protein is Small ribosomal subunit protein uS4c (rps4).